The following is a 168-amino-acid chain: Small ribosomal subunit protein uS5 (168 aa).

The S5 DRBM domain occupies 14–77 (FEERVVSINR…EAAKKNLITV (64 aa)).

Belongs to the universal ribosomal protein uS5 family. As to quaternary structure, part of the 30S ribosomal subunit. Contacts proteins S4 and S8.

In terms of biological role, with S4 and S12 plays an important role in translational accuracy. Functionally, located at the back of the 30S subunit body where it stabilizes the conformation of the head with respect to the body. This is Small ribosomal subunit protein uS5 from Lactococcus lactis subsp. lactis (strain IL1403) (Streptococcus lactis).